Consider the following 186-residue polypeptide: Translation initiation factor IF-3 (186 aa).

This sequence belongs to the IF-3 family. Monomer.

It is found in the cytoplasm. IF-3 binds to the 30S ribosomal subunit and shifts the equilibrium between 70S ribosomes and their 50S and 30S subunits in favor of the free subunits, thus enhancing the availability of 30S subunits on which protein synthesis initiation begins. The polypeptide is Translation initiation factor IF-3 (Borrelia garinii subsp. bavariensis (strain ATCC BAA-2496 / DSM 23469 / PBi) (Borreliella bavariensis)).